We begin with the raw amino-acid sequence, 1241 residues long: Putative ABC transporter B family member 8 (1241 aa).

A helical membrane pass occupies residues phenylalanine 24–glycine 44. Residues methionine 33–glutamate 323 enclose the ABC transmembrane type-1 1 domain. The N-linked (GlcNAc...) asparagine glycan is linked to asparagine 48. 5 helical membrane-spanning segments follow: residues leucine 82–tryptophan 102, valine 157–phenylalanine 177, valine 183–leucine 203, glycine 263–glycine 283, and isoleucine 297–glutamate 317. Residues valine 360–leucine 596 enclose the ABC transporter 1 domain. Residue glycine 395–serine 402 coordinates ATP. N-linked (GlcNAc...) asparagine glycans are attached at residues asparagine 571, asparagine 632, and asparagine 648. Residues serine 676 to lysine 964 enclose the ABC transmembrane type-1 2 domain. 2 helical membrane-spanning segments follow: residues phenylalanine 686–alanine 706 and isoleucine 716–leucine 736. Residue asparagine 773 is glycosylated (N-linked (GlcNAc...) asparagine). 2 helical membrane-spanning segments follow: residues isoleucine 797–leucine 815 and leucine 821–threonine 838. N-linked (GlcNAc...) asparagine glycosylation is present at asparagine 855. 2 helical membrane-spanning segments follow: residues alanine 899–leucine 919 and isoleucine 933–alanine 953. Residues isoleucine 998–alanine 1236 enclose the ABC transporter 2 domain. Glycine 1033–serine 1040 serves as a coordination point for ATP. Asparagine 1187 is a glycosylation site (N-linked (GlcNAc...) asparagine).

The protein belongs to the ABC transporter superfamily. ABCB family. Multidrug resistance exporter (TC 3.A.1.201) subfamily.

Its subcellular location is the membrane. In Arabidopsis thaliana (Mouse-ear cress), this protein is Putative ABC transporter B family member 8 (ABCB8).